Here is a 126-residue protein sequence, read N- to C-terminus: S-adenosylmethionine decarboxylase proenzyme (126 aa).

Ser-63 functions as the Schiff-base intermediate with substrate; via pyruvic acid in the catalytic mechanism. The residue at position 63 (Ser-63) is a Pyruvic acid (Ser); by autocatalysis. The active-site Proton acceptor; for processing activity is His-68. Cys-83 serves as the catalytic Proton donor; for catalytic activity.

This sequence belongs to the prokaryotic AdoMetDC family. Type 1 subfamily. As to quaternary structure, heterotetramer of two alpha and two beta chains arranged as a dimer of alpha/beta heterodimers. It depends on pyruvate as a cofactor. Is synthesized initially as an inactive proenzyme. Formation of the active enzyme involves a self-maturation process in which the active site pyruvoyl group is generated from an internal serine residue via an autocatalytic post-translational modification. Two non-identical subunits are generated from the proenzyme in this reaction, and the pyruvate is formed at the N-terminus of the alpha chain, which is derived from the carboxyl end of the proenzyme. The post-translation cleavage follows an unusual pathway, termed non-hydrolytic serinolysis, in which the side chain hydroxyl group of the serine supplies its oxygen atom to form the C-terminus of the beta chain, while the remainder of the serine residue undergoes an oxidative deamination to produce ammonia and the pyruvoyl group blocking the N-terminus of the alpha chain.

It catalyses the reaction S-adenosyl-L-methionine + H(+) = S-adenosyl 3-(methylsulfanyl)propylamine + CO2. The protein operates within amine and polyamine biosynthesis; S-adenosylmethioninamine biosynthesis; S-adenosylmethioninamine from S-adenosyl-L-methionine: step 1/1. Catalyzes the decarboxylation of S-adenosylmethionine to S-adenosylmethioninamine (dcAdoMet), the propylamine donor required for the synthesis of the polyamines spermine and spermidine from the diamine putrescine. This Oceanobacillus iheyensis (strain DSM 14371 / CIP 107618 / JCM 11309 / KCTC 3954 / HTE831) protein is S-adenosylmethionine decarboxylase proenzyme.